A 404-amino-acid polypeptide reads, in one-letter code: Protein translocase subunit SecD (404 aa).

Transmembrane regions (helical) follow at residues 7–27 (HYIW…FNKV), 239–259 (LIAL…PGIV), 262–282 (IALL…GAAL), 283–303 (TLPG…SNVI), 330–350 (FPAI…LFFL), and 357–377 (GFAV…VFVS).

This sequence belongs to the SecD/SecF family. SecD subfamily. As to quaternary structure, forms a complex with SecF. Part of the essential Sec protein translocation apparatus which comprises SecA, SecYEG and auxiliary proteins SecDF. Other proteins may also be involved.

The protein resides in the cell inner membrane. In terms of biological role, part of the Sec protein translocase complex. Interacts with the SecYEG preprotein conducting channel. SecDF uses the proton motive force (PMF) to complete protein translocation after the ATP-dependent function of SecA. This chain is Protein translocase subunit SecD, found in Leptotrichia buccalis (strain ATCC 14201 / DSM 1135 / JCM 12969 / NCTC 10249 / C-1013-b).